Reading from the N-terminus, the 225-residue chain is UPF0173 metal-dependent hydrolase PYRAB05000 (225 aa).

The protein belongs to the UPF0173 family.

This chain is UPF0173 metal-dependent hydrolase PYRAB05000, found in Pyrococcus abyssi (strain GE5 / Orsay).